Consider the following 440-residue polypeptide: Ribulose bisphosphate carboxylase large chain (440 aa).

N6,N6,N6-trimethyllysine is present on Lys4. Substrate contacts are provided by Asn113 and Thr163. Lys165 functions as the Proton acceptor in the catalytic mechanism. Lys167 is a binding site for substrate. Residues Lys191, Asp193, and Glu194 each coordinate Mg(2+). Residue Lys191 is modified to N6-carboxylysine. Catalysis depends on His284, which acts as the Proton acceptor. Substrate-binding residues include Arg285, His317, and Ser369.

The protein belongs to the RuBisCO large chain family. Type I subfamily. Heterohexadecamer of 8 large chains and 8 small chains; disulfide-linked. The disulfide link is formed within the large subunit homodimers. The cofactor is Mg(2+). Post-translationally, the disulfide bond which can form in the large chain dimeric partners within the hexadecamer appears to be associated with oxidative stress and protein turnover.

The protein resides in the plastid. Its subcellular location is the chloroplast. It catalyses the reaction 2 (2R)-3-phosphoglycerate + 2 H(+) = D-ribulose 1,5-bisphosphate + CO2 + H2O. The enzyme catalyses D-ribulose 1,5-bisphosphate + O2 = 2-phosphoglycolate + (2R)-3-phosphoglycerate + 2 H(+). In terms of biological role, ruBisCO catalyzes two reactions: the carboxylation of D-ribulose 1,5-bisphosphate, the primary event in carbon dioxide fixation, as well as the oxidative fragmentation of the pentose substrate in the photorespiration process. Both reactions occur simultaneously and in competition at the same active site. The chain is Ribulose bisphosphate carboxylase large chain from Matteuccia struthiopteris (European ostrich fern).